The chain runs to 336 residues: Glucokinase (336 aa).

12–17 (ADIGGT) is an ATP binding site.

The protein belongs to the bacterial glucokinase family.

It is found in the cytoplasm. The enzyme catalyses D-glucose + ATP = D-glucose 6-phosphate + ADP + H(+). This Helicobacter pylori (strain P12) protein is Glucokinase.